The chain runs to 201 residues: Keratin-associated protein 4-12 (201 aa).

Tandem repeats lie at residues 5–9, 20–24, 25–29, 30–34, 35–39, 40–44, 45–49, 50–54, 55–59, 60–64, 65–69, 70–74, 75–79, 80–84, 85–89, 90–94, 95–99, 100–104, 105–109, 110–114, 115–119, 120–124, 125–129, 130–134, 135–139, 140–144, 145–149, 155–159, 160–164, and 165–169. A 31 X 5 AA repeats of C-C-[GRQVIL]-[SPTR]-[VSTQPC] region spans residues 5-169; that stretch reads CCGSVCSDQG…CCRPCCCLRP (165 aa).

The protein belongs to the KRTAP type 4 family. In terms of assembly, interacts with hair keratins. Expressed in the hair follicles.

In terms of biological role, in the hair cortex, hair keratin intermediate filaments are embedded in an interfilamentous matrix, consisting of hair keratin-associated proteins (KRTAP), which are essential for the formation of a rigid and resistant hair shaft through their extensive disulfide bond cross-linking with abundant cysteine residues of hair keratins. The matrix proteins include the high-sulfur and high-glycine-tyrosine keratins. This is Keratin-associated protein 4-12 (KRTAP4-12) from Homo sapiens (Human).